The sequence spans 626 residues: UPF0313 protein MM_1287 (626 aa).

The disordered stretch occupies residues 206–227 (GKGKEKAGEQDESENATEEVAK). Residues 320–589 (ALEMVKFSLT…AMQRALMHYR (270 aa)) form the Radical SAM core domain. Residues Cys-334, Cys-338, and Cys-341 each coordinate [4Fe-4S] cluster.

This sequence belongs to the UPF0313 family. [4Fe-4S] cluster is required as a cofactor.

This Methanosarcina mazei (strain ATCC BAA-159 / DSM 3647 / Goe1 / Go1 / JCM 11833 / OCM 88) (Methanosarcina frisia) protein is UPF0313 protein MM_1287.